A 90-amino-acid chain; its full sequence is Acylphosphatase (90 aa).

The 86-residue stretch at 3 to 88 (TWHMTAHGRV…GKFEDFDLRP (86 aa)) folds into the Acylphosphatase-like domain. Residues R18 and N36 contribute to the active site.

This sequence belongs to the acylphosphatase family.

The enzyme catalyses an acyl phosphate + H2O = a carboxylate + phosphate + H(+). The protein is Acylphosphatase (acyP) of Cupriavidus pinatubonensis (strain JMP 134 / LMG 1197) (Cupriavidus necator (strain JMP 134)).